The primary structure comprises 235 residues: MKAYPFTSTTATTMRQNCGGSLMFNMYLSDPTENLLKESKSPSWTPINTGVQKGSGQIQLWQFLLELLSDSANMTCIAWEGTNGEFKLIDPDEVARRWGERKSKPNMNYDKLSRALRYYYDKNIMTKVHGKRYAYKFDFNGLAQVCQPSSTEQAIYKFQSNFAPIQFSGISKLNLVAPGVGPSGFSYWPGSPPTLYHSHNLQPPGPFGAVSASHLSCVNNINSLNNLNNINNHYN.

A DNA-binding region (ETS) is located at residues Ile-58–Asp-138.

Belongs to the ETS family. In terms of tissue distribution, expressed by serotonergic neurons in anterior and posterior raphe.

It is found in the nucleus. In terms of biological role, functions as a transcriptional regulator. Functions in the differentiation and the maintenance of the central serotonergic neurons. May play a role in cell growth. This chain is Protein FEV (fev), found in Danio rerio (Zebrafish).